Reading from the N-terminus, the 209-residue chain is Ras-like GTP-binding protein RYL2 (209 aa).

12–19 (GAQGVGKT) lines the GTP pocket. Positions 34–42 (QASTIGASF) match the Effector region motif. GTP-binding positions include 60-64 (DTAGQ) and 118-121 (TKVD). 2 S-geranylgeranyl cysteine lipidation sites follow: cysteine 208 and cysteine 209.

Belongs to the small GTPase superfamily. Rab family.

It localises to the cell membrane. In terms of biological role, protein transport. Probably involved in vesicular traffic. This chain is Ras-like GTP-binding protein RYL2 (RYL2), found in Yarrowia lipolytica (strain CLIB 122 / E 150) (Yeast).